Reading from the N-terminus, the 469-residue chain is Neuraminidase (469 aa).

The Intravirion portion of the chain corresponds to 1–6 (MNPNQK). A helical transmembrane segment spans residues 7 to 27 (IITIGSICMVVGIISLILQIG). Positions 11 to 33 (GSICMVVGIISLILQIGNIVSIW) are involved in apical transport and lipid raft association. At 28-469 (NIVSIWISHS…GAELPFTIDK (442 aa)) the chain is on the virion surface side. Positions 36-90 (HSIQTGNQNHTGTCNQSIITYKNSTWVNQTYVNISNTNVVAGKDTTSVILAGNSS) are hypervariable stalk region. N-linked (GlcNAc...) asparagine; by host glycosylation is found at Asn-44, Asn-50, Asn-58, Asn-63, Asn-68, and Asn-88. Positions 91–469 (LCPIRGWAIY…GAELPFTIDK (379 aa)) are head of neuraminidase. 8 disulfides stabilise this stretch: Cys-92–Cys-417, Cys-124–Cys-129, Cys-184–Cys-231, Cys-233–Cys-238, Cys-279–Cys-292, Cys-281–Cys-290, Cys-318–Cys-335, and Cys-421–Cys-446. Position 118 (Arg-118) interacts with substrate. Asn-146 carries N-linked (GlcNAc...) asparagine; by host glycosylation. Residue Asp-151 is the Proton donor/acceptor of the active site. Substrate is bound at residue Arg-152. An N-linked (GlcNAc...) asparagine; by host glycan is attached at Asn-235. Substrate is bound at residue 277 to 278 (EE). Substrate is bound at residue Arg-293. Ca(2+) contacts are provided by Asp-294, Gly-298, Asp-324, and Asn-344. Residue Asn-365 is glycosylated (N-linked (GlcNAc...) asparagine; by host). Arg-368 provides a ligand contact to substrate. Tyr-402 functions as the Nucleophile in the catalytic mechanism.

Belongs to the glycosyl hydrolase 34 family. In terms of assembly, homotetramer. Ca(2+) is required as a cofactor. N-glycosylated.

Its subcellular location is the virion membrane. It localises to the host apical cell membrane. It catalyses the reaction Hydrolysis of alpha-(2-&gt;3)-, alpha-(2-&gt;6)-, alpha-(2-&gt;8)- glycosidic linkages of terminal sialic acid residues in oligosaccharides, glycoproteins, glycolipids, colominic acid and synthetic substrates.. With respect to regulation, inhibited by the neuraminidase inhibitors zanamivir (Relenza) and oseltamivir (Tamiflu). These drugs interfere with the release of progeny virus from infected cells and are effective against all influenza strains. Resistance to neuraminidase inhibitors is quite rare. In terms of biological role, catalyzes the removal of terminal sialic acid residues from viral and cellular glycoconjugates. Cleaves off the terminal sialic acids on the glycosylated HA during virus budding to facilitate virus release. Additionally helps virus spread through the circulation by further removing sialic acids from the cell surface. These cleavages prevent self-aggregation and ensure the efficient spread of the progeny virus from cell to cell. Otherwise, infection would be limited to one round of replication. Described as a receptor-destroying enzyme because it cleaves a terminal sialic acid from the cellular receptors. May facilitate viral invasion of the upper airways by cleaving the sialic acid moieties on the mucin of the airway epithelial cells. Likely to plays a role in the budding process through its association with lipid rafts during intracellular transport. May additionally display a raft-association independent effect on budding. Plays a role in the determination of host range restriction on replication and virulence. Sialidase activity in late endosome/lysosome traffic seems to enhance virus replication. The sequence is that of Neuraminidase from Aves (Human).